Reading from the N-terminus, the 387-residue chain is Signal-regulatory protein gamma (387 aa).

The signal sequence occupies residues 1–28 (MPVPASWPHPPGPFLLLTLLLGLTEVAG). An Ig-like V-type domain is found at 29 to 137 (EEELQMIQPE…ENVEFKSGPG (109 aa)). The Extracellular segment spans residues 29-360 (EEELQMIQPE…QKDQSSDATP (332 aa)). 2 disulfides stabilise this stretch: Cys53–Cys119 and Cys168–Cys226. 2 Ig-like C1-type domains span residues 146-245 (PSAP…ANLS) and 252-340 (PTLE…LAVS). Asn243, Asn268, Asn309, and Asn317 each carry an N-linked (GlcNAc...) asparagine glycan. A disulfide bond links Cys271 and Cys329. The chain crosses the membrane as a helical span at residues 361–383 (GPASSLTALLLIAVLLGPIYVPW). Residues 384 to 387 (KQKT) are Cytoplasmic-facing.

In terms of assembly, interacts with CD47. Detected in liver, and at very low levels in brain, heart, lung, pancreas, kidney, placenta and skeletal muscle. Expressed on CD4+ T-cells, CD8+ T-cells, CD56-bright natural killer (NK) cells, CD20+ cells, and all activated NK cells. Mainly present in the paracortical T-cell area of lymph nodes, with only sparse positive cells in the mantle and in the germinal center of B-cell follicles. In the thymus, primarily expressed in the medulla on mature T-lymphocytes that have undergone thymic selection.

It is found in the membrane. In terms of biological role, probable immunoglobulin-like cell surface receptor. On binding with CD47, mediates cell-cell adhesion. Engagement on T-cells by CD47 on antigen-presenting cells results in enhanced antigen-specific T-cell proliferation and costimulates T-cell activation. The chain is Signal-regulatory protein gamma (SIRPG) from Homo sapiens (Human).